Here is a 209-residue protein sequence, read N- to C-terminus: Mitochondrial import inner membrane translocase subunit Tim23 (209 aa).

3 helical membrane passes run 73 to 93 (FELAFFTIGGCCMTVAAFGAM), 125 to 145 (ALWANTLGSLALLYSAFGVII), and 172 to 194 (GGLRGIARGGLTGLTLTSLYALY).

This sequence belongs to the Tim17/Tim22/Tim23 family. Component of the TIM23 complex at least composed of TIMM23, TIMM17 (TIMM17A or TIMM17B) and TIMM50; within this complex, directly interacts with TIMM50. The complex interacts with the TIMM44 component of the PAM complex and with DNAJC15. Upon mitochondrial depolarization, interacts with PINK1; the interaction is required for PINK1 accumulation at the outer mitochondrial membrane, kinase activation by autophosphorylation and PRKN recruitement to mitochondria.

It localises to the mitochondrion inner membrane. In terms of biological role, essential component of the TIM23 complex, a complex that mediates the translocation of transit peptide-containing proteins across the mitochondrial inner membrane. Has a role in the activation of stress-induced mitophagy by protecting PINK1 from OMA1-mediated degradation and facilitating its accumulation at the outer mitochondrial membrane in response to depolarization. This chain is Mitochondrial import inner membrane translocase subunit Tim23 (TIMM23), found in Pongo abelii (Sumatran orangutan).